The chain runs to 565 residues: Protein NRT1/ PTR FAMILY 5.15 (565 aa).

2 consecutive transmembrane segments (helical) span residues 49–67 (FAYFGIACNLITYLTGPLG) and 80–100 (WSGTASILPILGAFVADAYLG). Residue Thr104 is modified to Phosphothreonine. A run of 10 helical transmembrane segments spans residues 110–130 (LIYILGLGLLTLSASLIIMGL), 142–162 (SIWVNTLFFCSLYLVAIGQGG), 189–209 (FFNWWFLSLSAGISISIIVVA), 217–237 (WAFGFGIPCLFMVMALAIFLL), 331–351 (IPIWITYVVSTIPYAQYITFF), 368–388 (IPAASLLSFVGVSILISVPLY), 409–429 (LQRIGAGMVLSVFNMMLAALV), 454–474 (IWWFVPQYLLLGMIDLFSMVG), 490–510 (IGLSLSLSAMGLSSFLSGFLI), and 534–554 (YFYWLLAAFTAIAFFAFLFIS).

Belongs to the major facilitator superfamily. Proton-dependent oligopeptide transporter (POT/PTR) (TC 2.A.17) family. Expressed in shoots, roots and leaves.

It localises to the membrane. The chain is Protein NRT1/ PTR FAMILY 5.15 (NPF5.15) from Arabidopsis thaliana (Mouse-ear cress).